The primary structure comprises 498 residues: Aminotransferase swnA (498 aa).

It belongs to the class-I pyridoxal-phosphate-dependent aminotransferase family. Requires pyridoxal 5'-phosphate as cofactor.

The protein operates within mycotoxin biosynthesis. Its function is as follows. Aminotransferase; part of the gene cluster that mediates the biosynthesis of swainsonine (SW), a cytotoxic fungal alkaloid and a potential cancer therapy drug. Swainsonine production occurs via a multibranched pathway and is dispensable for fungal colonization of plants and infection of insect hosts. The first step of swainsonine biosynthesis is the production of the precursor pipecolic acid (PA) via conversion of L-lysine (Lys) to 1-piperideine-6-carboxylate (P6C) by the aminotransferase swnA, the latter being further reduced to PA by the reductase swnR. PA can be converted from lysine by both the SW biosynthetic cluster and the unclustered genes such as lysine cyclodeaminase. The PKS-NRPS hybrid synthetase swnK uptakes and condensates PA and malonyl-CoA with and without skipping of the ketoreductase (KR) domain in order to produce 3 intermediates, 1-oxoindolizidine, (1S)-1-hydroxyindolizin, and (1R)-1-hydroxyindolizine; with the transisomer (1S)-1-hydroxyindolizin being predominant. The terminal thioester reductase (TE) domain of swnK is involved in reduction of the thioester bond to release the intermediate aldehydes. The oxidoreductase swnN could contribute to the reduction of 1-oxoindolizidine to (1S)-1-hydroxyindolizin and (1R)-1-hydroxyindolizine, contributing to the major route of SW production. The dioxygenase swnH2 would be responsible for the oxidization of (1R)-1-hydroxyindolizine into (1R,2S)-1,2-dihydroxyindolizine and of (1S)-1-hydroxyindolizin to yield both (1R,2S)-1,2-dihydroxyindolizine and (1S,2S)-1,2-dihydroxyindolizine. The dioxygenase swnH1 then performs the conversion of the 1,2-dihydroxyindolizine epimers to SW. The polypeptide is Aminotransferase swnA (Metarhizium robertsii (strain ARSEF 23 / ATCC MYA-3075) (Metarhizium anisopliae (strain ARSEF 23))).